The sequence spans 107 residues: Iron-binding protein IscA (107 aa).

Residues Cys35, Cys99, and Cys101 each contribute to the Fe cation site.

This sequence belongs to the HesB/IscA family. As to quaternary structure, homodimer; may form tetramers and higher multimers. Requires Fe cation as cofactor.

Its function is as follows. Is able to transfer iron-sulfur clusters to apo-ferredoxin. Multiple cycles of [2Fe2S] cluster formation and transfer are observed, suggesting that IscA acts catalytically. Recruits intracellular free iron so as to provide iron for the assembly of transient iron-sulfur cluster in IscU in the presence of IscS, L-cysteine and the thioredoxin reductase system TrxA/TrxB. This chain is Iron-binding protein IscA, found in Serratia proteamaculans (strain 568).